The following is a 93-amino-acid chain: CRISPR-associated endoribonuclease Cas2 (93 aa).

Residue D8 coordinates Mg(2+).

It belongs to the CRISPR-associated endoribonuclease Cas2 protein family. As to quaternary structure, homodimer, forms a heterotetramer with a Cas1 homodimer. Mg(2+) serves as cofactor.

In terms of biological role, CRISPR (clustered regularly interspaced short palindromic repeat), is an adaptive immune system that provides protection against mobile genetic elements (viruses, transposable elements and conjugative plasmids). CRISPR clusters contain sequences complementary to antecedent mobile elements and target invading nucleic acids. CRISPR clusters are transcribed and processed into CRISPR RNA (crRNA). Functions as a ssRNA-specific endoribonuclease. Involved in the integration of spacer DNA into the CRISPR cassette. This is CRISPR-associated endoribonuclease Cas2 from Thermofilum pendens (strain DSM 2475 / Hrk 5).